Reading from the N-terminus, the 704-residue chain is DNA-directed DNA polymerase (704 aa).

The interval 1 to 187 is 3'-5'exonuclease; it reads MIVSDIEANA…TKALLEKLLS (187 aa). Aspartate 5, glutamate 7, and aspartate 174 together coordinate Mg(2+). Residues 202-704 are polymerase; the sequence is GYTTFWSESL…KMGPNWAICH (503 aa). Positions 262–338 are binding to host TrxA; it reads GSWYQPKGGT…VEHVVFNPSS (77 aa). Residues aspartate 475 and alanine 476 each coordinate Mg(2+). The substrate site is built by histidine 506, arginine 518, lysine 522, and tyrosine 526. Position 654 (aspartate 654) interacts with Mg(2+).

It belongs to the DNA polymerase type-A family. As to quaternary structure, composed of two subunits. One is encoded by the phage and the other is encoded by the host thioredoxin. Interacts with DNA primase/helicase; this interaction is essential for the coordination of DNA unwinding and nucleotide polymerization on duplex DNA. Interacts with the ssDNA-binding protein. Part of the replicase complex that includes the DNA polymerase, thioredoxin, the primase/helicase and the single-stranded DNA binding protein. Mg(2+) is required as a cofactor.

The enzyme catalyses DNA(n) + a 2'-deoxyribonucleoside 5'-triphosphate = DNA(n+1) + diphosphate. In terms of biological role, replicates viral genomic DNA. This polymerase possesses two enzymatic activities: DNA synthesis (polymerase) and an exonucleolytic activity that degrades single-stranded DNA in the 3'-5' direction. Non-processive DNA polymerase that achieves processivity by binding to host thioredoxin (TrxA). This interaction increases the rate of dNTP incorporation to yield a processivity of approximately 800 nucleotides (nt) per binding event. Interacts with DNA helicase gp4 to coordinate nucleotide polymerization with unwinding of the DNA. The leading strand is synthesized continuously while synthesis of the lagging strand requires the synthesis of oligoribonucleotides by the primase domain of gp4. The polypeptide is DNA-directed DNA polymerase (Escherichia phage T7 (Bacteriophage T7)).